The following is a 336-amino-acid chain: Phospho-N-acetylmuramoyl-pentapeptide-transferase (336 aa).

Transmembrane regions (helical) follow at residues 3-23, 53-73, 78-98, 118-138, 143-163, 174-194, 200-220, 226-246, 251-271, and 316-336; these read LTLI…PYFI, GGTV…LFSI, SLAL…IGFL, LALQ…PSGI, VFGY…FWVV, GIDG…GVIA, FDVL…FCFN, VFMG…ISIA, WTLL…MLQV, and AFLW…LYVF.

It belongs to the glycosyltransferase 4 family. MraY subfamily. Requires Mg(2+) as cofactor.

It is found in the cell membrane. The enzyme catalyses UDP-N-acetyl-alpha-D-muramoyl-L-alanyl-gamma-D-glutamyl-L-lysyl-D-alanyl-D-alanine + di-trans,octa-cis-undecaprenyl phosphate = Mur2Ac(oyl-L-Ala-gamma-D-Glu-L-Lys-D-Ala-D-Ala)-di-trans,octa-cis-undecaprenyl diphosphate + UMP. The protein operates within cell wall biogenesis; peptidoglycan biosynthesis. Functionally, catalyzes the initial step of the lipid cycle reactions in the biosynthesis of the cell wall peptidoglycan: transfers peptidoglycan precursor phospho-MurNAc-pentapeptide from UDP-MurNAc-pentapeptide onto the lipid carrier undecaprenyl phosphate, yielding undecaprenyl-pyrophosphoryl-MurNAc-pentapeptide, known as lipid I. This is Phospho-N-acetylmuramoyl-pentapeptide-transferase from Streptococcus pyogenes serotype M4 (strain MGAS10750).